Here is a 171-residue protein sequence, read N- to C-terminus: Protein BTG1 (171 aa).

S159 carries the phosphoserine modification.

The protein belongs to the BTG family. In terms of assembly, interacts with CNOT7 and CNOT8.

Functionally, anti-proliferative protein. The sequence is that of Protein BTG1 (BTG1) from Homo sapiens (Human).